The sequence spans 87 residues: MSERNDRKVYVGKVVSDKMDKTITVLVETYKTHKLYGKRVKYSKKYKTHDENNSAKLGDIVKIQETRPLSASKRFRLVEIVEESVII.

The protein belongs to the universal ribosomal protein uS17 family. In terms of assembly, part of the 30S ribosomal subunit.

Its function is as follows. One of the primary rRNA binding proteins, it binds specifically to the 5'-end of 16S ribosomal RNA. In Staphylococcus haemolyticus (strain JCSC1435), this protein is Small ribosomal subunit protein uS17.